The primary structure comprises 304 residues: Glutaminase (304 aa).

Residues S63, N113, E157, N164, Y188, Y240, and V258 each coordinate substrate.

This sequence belongs to the glutaminase family. As to quaternary structure, homotetramer.

The catalysed reaction is L-glutamine + H2O = L-glutamate + NH4(+). This chain is Glutaminase, found in Ralstonia nicotianae (strain ATCC BAA-1114 / GMI1000) (Ralstonia solanacearum).